A 360-amino-acid polypeptide reads, in one-letter code: MIDALYQAGLQLLPGGWWTGMVWPVLWILLKIVALLIPLMGAVAYLTLWERKLLGFMQVRHGPNRVGPWGLLQPIADALKLLTKEIIQPTAASRGLFVLGPVMAIMPALAAWVVIPFGPDVALANVNAGLLLVMAITSIEVYGVIIAGWASNSKYAFLGALRASAQMVSYEIAMGFCLLIVIMVSGSMNLTEIVLAQGRGVAAANGIGFLSWNWLPLLPVFLVYLISGVAETNRHPFDVVEGEAEIVAGHMVEYSGMGFAIFFLAEYASMWLVSILAALMFLGGWLPPVDSASLHWIPGWIWLGIKTCLVVSMFIWIRATFPRFRYDQIMRLGWKIFIPVTLACLLIAGGWLLSPWNIWK.

The next 8 helical transmembrane spans lie at 20-40 (GMVW…IPLM), 95-115 (GLFV…WVVI), 130-150 (LLLV…AGWA), 176-196 (FCLL…IVLA), 206-226 (GIGF…VYLI), 261-281 (IFFL…ALMF), 297-317 (IPGW…FIWI), and 336-356 (IFIP…LSPW).

This sequence belongs to the complex I subunit 1 family. In terms of assembly, NDH-1 is composed of 14 different subunits. Subunits NuoA, H, J, K, L, M, N constitute the membrane sector of the complex.

It localises to the cell inner membrane. It catalyses the reaction a quinone + NADH + 5 H(+)(in) = a quinol + NAD(+) + 4 H(+)(out). NDH-1 shuttles electrons from NADH, via FMN and iron-sulfur (Fe-S) centers, to quinones in the respiratory chain. The immediate electron acceptor for the enzyme in this species is believed to be ubiquinone. Couples the redox reaction to proton translocation (for every two electrons transferred, four hydrogen ions are translocated across the cytoplasmic membrane), and thus conserves the redox energy in a proton gradient. This subunit may bind ubiquinone. The polypeptide is NADH-quinone oxidoreductase subunit H (Verminephrobacter eiseniae (strain EF01-2)).